Consider the following 734-residue polypeptide: Exonuclease 1 (734 aa).

The interval 1 to 99 is N-domain; the sequence is MGIQGLLQFL…KARREKRQTN (99 aa). The Mg(2+) site is built by D30, D78, E150, D152, D171, D173, and D225. An I-domain region spans residues 138-229; it reads RSEGVDYIVA…ILSGCDYLPS (92 aa). Disordered stretches follow at residues 599-650, 656-675, and 685-716; these read EAEN…CQFT, AHQS…KVPG, and GLRT…NENV. The span at 604–620 shows a compositional bias: polar residues; that stretch reads PSWQSSCIKSDTVSQID. Residues 621–641 are compositionally biased toward basic and acidic residues; sequence SNEKLLKKQDIEDTDSDEHAS. A compositionally biased stretch (polar residues) spans 700-715; it reads GLTNRSNTKATRNNEN.

It belongs to the XPG/RAD2 endonuclease family. EXO1 subfamily. Requires Mg(2+) as cofactor.

The protein resides in the nucleus. Its function is as follows. 5'-&gt;3' double-stranded DNA exonuclease which may also contain a cryptic 3'-&gt;5' double-stranded DNA exonuclease activity. Also exhibits endonuclease activity against 5'-overhanging flap structures similar to those generated by displacement synthesis when DNA polymerase encounters the 5'-end of a downstream Okazaki fragment. Required for DNA mismatch repair (MMR). In Xenopus laevis (African clawed frog), this protein is Exonuclease 1 (exo1).